Consider the following 325-residue polypeptide: Beta-ketoacyl-[acyl-carrier-protein] synthase III (325 aa).

Residues Cys-119 and His-252 contribute to the active site. An ACP-binding region spans residues 253–257 (QANIR). Residue Asn-282 is part of the active site.

The protein belongs to the thiolase-like superfamily. FabH family. Homodimer.

Its subcellular location is the cytoplasm. The enzyme catalyses malonyl-[ACP] + acetyl-CoA + H(+) = 3-oxobutanoyl-[ACP] + CO2 + CoA. The protein operates within lipid metabolism; fatty acid biosynthesis. In terms of biological role, catalyzes the condensation reaction of fatty acid synthesis by the addition to an acyl acceptor of two carbons from malonyl-ACP. Catalyzes the first condensation reaction which initiates fatty acid synthesis and may therefore play a role in governing the total rate of fatty acid production. Possesses both acetoacetyl-ACP synthase and acetyl transacylase activities. Its substrate specificity determines the biosynthesis of branched-chain and/or straight-chain of fatty acids. The chain is Beta-ketoacyl-[acyl-carrier-protein] synthase III from Verminephrobacter eiseniae (strain EF01-2).